The following is a 317-amino-acid chain: L-lactate dehydrogenase (317 aa).

Residues V17, D38, K43, Y69, and 83–84 (GA) each bind NAD(+). The substrate site is built by Q86 and R92. NAD(+)-binding positions include S105, 122-124 (ATN), and S147. 124–127 (NPVD) lines the substrate pocket. 152–155 (DSAR) provides a ligand contact to substrate. Residues R157 and H172 each coordinate beta-D-fructose 1,6-bisphosphate. H179 (proton acceptor) is an active-site residue. Phosphotyrosine is present on Y224. A substrate-binding site is contributed by T233.

The protein belongs to the LDH/MDH superfamily. LDH family. As to quaternary structure, homotetramer.

It localises to the cytoplasm. The catalysed reaction is (S)-lactate + NAD(+) = pyruvate + NADH + H(+). It participates in fermentation; pyruvate fermentation to lactate; (S)-lactate from pyruvate: step 1/1. With respect to regulation, allosterically activated by fructose 1,6-bisphosphate (FBP). Functionally, catalyzes the conversion of lactate to pyruvate. This Bacillus velezensis (strain DSM 23117 / BGSC 10A6 / LMG 26770 / FZB42) (Bacillus amyloliquefaciens subsp. plantarum) protein is L-lactate dehydrogenase.